A 691-amino-acid chain; its full sequence is Solute carrier family 28 member 3 (691 aa).

The segment at 1 to 78 (MELRSTAAPR…HMEDDDEEMQ (78 aa)) is disordered. Residues 1 to 102 (MELRSTAAPR…FCRKHKTTLR (102 aa)) are Cytoplasmic-facing. The span at 21–30 (NEENFLENEN) shows a compositional bias: low complexity. Positions 31 to 42 (TSGNNSIRSRAV) are enriched in polar residues. Residues 43-54 (QSREHTNTKQDE) are compositionally biased toward basic and acidic residues. The chain crosses the membrane as a helical span at residues 103–123 (HIIWGILLAGYLVMVISACVL). Residues 124–128 (NFHRA) lie on the Extracellular side of the membrane. Residues 129–149 (LPLFVITVAAIFFVVWDHLMA) form a helical membrane-spanning segment. The Cytoplasmic segment spans residues 150–173 (KYEHRIDEMLSPGRRLLNSHWFWL). A helical membrane pass occupies residues 174–194 (KWVIWSSLVLAVIFWLAFDTA). The Extracellular segment spans residues 195 to 197 (KLG). A helical transmembrane segment spans residues 198 to 219 (QQQLVSFGGLIMYIVLLFLFSK). At 220-227 (YPTRVYWR) the chain is on the cytoplasmic side. Residues 228 to 247 (PVLWGIGLQFLLGLLILRTD) traverse the membrane as a helical segment. The Extracellular portion of the chain corresponds to 248–284 (PGFIAFDWLGRQVQTFLEYTDAGASFVFGEKYKDHFF). A helical transmembrane segment spans residues 285–305 (AFKVLPIVVFFSTVMSMLYYL). Topologically, residues 306 to 329 (GLMQWIIRKVGWIMLVTTGSSPIE) are cytoplasmic. Residues 330–348 (SVVASGNIFVGQTESPLLV) constitute an intramembrane region (helical). Topologically, residues 349-361 (RPYLPYITKSELH) are cytoplasmic. The helical transmembrane segment at 362–384 (AIMTAGFSTIAGSVLGAYISFGV) threads the bilayer. The Extracellular portion of the chain corresponds to 385–386 (PS). Residues 387 to 408 (SHLLTASVMSAPASLAAAKLFW) form a helical membrane-spanning segment. Residues 409–443 (PETEKPKITLKNAMKMESGDSGNLLEAATQGASSS) are Cytoplasmic-facing. Residues 444–469 (ISLVANIAVNLIAFLALLSFMNSALS) form a helical membrane-spanning segment. At 470–507 (WFGNMFDYPQLSFELICSYIFMPFSFMMGVEWQDSFMV) the chain is on the extracellular side. Positions 508-527 (ARLIGYKTFFNEFVAYEHLS) form an intramembrane region, helical. At 528–566 (KWIHLRKEGGPKFVNGVQQYISIRSEIIATYALCGFANI) the chain is on the extracellular side. The helical transmembrane segment at 567 to 577 (GSLGIVIGGLT) threads the bilayer. The Cytoplasmic segment spans residues 578 to 590 (SMAPSRKRDIASG). Residues 591–613 (AVRALIAGTVACFMTACIAGILS) form a helical membrane-spanning segment. At 614–691 (STPVDINCHH…FNCNGISNTF (78 aa)) the chain is on the extracellular side.

It belongs to the concentrative nucleoside transporter (CNT) (TC 2.A.41) family. Homotrimer. In terms of tissue distribution, expressed in pancreas, bone marrow, trachea, mammary gland, liver, prostate, and regions of intestine, brain, lung, placenta, testis, kidney, and heart.

Its subcellular location is the cell membrane. The protein localises to the endoplasmic reticulum membrane. The enzyme catalyses thymidine(out) + 2 Na(+)(out) = thymidine(in) + 2 Na(+)(in). The catalysed reaction is cytidine(out) + 2 Na(+)(out) = cytidine(in) + 2 Na(+)(in). It carries out the reaction uridine(out) + 2 Na(+)(out) = uridine(in) + 2 Na(+)(in). It catalyses the reaction adenosine(out) + 2 Na(+)(out) = adenosine(in) + 2 Na(+)(in). The enzyme catalyses guanosine(out) + 2 Na(+)(out) = guanosine(in) + 2 Na(+)(in). The catalysed reaction is inosine(out) + 2 Na(+)(out) = inosine(in) + 2 Na(+)(in). In terms of biological role, sodium-dependent, pyrimidine- and purine-selective. Involved in the homeostasis of endogenous nucleosides. Exhibits the transport characteristics of the nucleoside transport system cib or N3 subtype (N3/cib) (with marked transport of both thymidine and inosine). Employs a 2:1 sodium/nucleoside ratio. Transports uridine. Also able to transport gemcitabine, 3'-azido-3'-deoxythymidine (AZT), ribavirin and 3-deazauridine. The chain is Solute carrier family 28 member 3 (SLC28A3) from Homo sapiens (Human).